We begin with the raw amino-acid sequence, 576 residues long: Arginine--tRNA ligase (576 aa).

A 'HIGH' region motif is present at residues 122–132; sequence PNVAKQMHVGH.

This sequence belongs to the class-I aminoacyl-tRNA synthetase family. In terms of assembly, monomer.

The protein localises to the cytoplasm. The catalysed reaction is tRNA(Arg) + L-arginine + ATP = L-arginyl-tRNA(Arg) + AMP + diphosphate. This is Arginine--tRNA ligase from Photorhabdus laumondii subsp. laumondii (strain DSM 15139 / CIP 105565 / TT01) (Photorhabdus luminescens subsp. laumondii).